Consider the following 379-residue polypeptide: UDP-4-amino-4-deoxy-L-arabinose--oxoglutarate aminotransferase (379 aa).

N6-(pyridoxal phosphate)lysine is present on lysine 182.

The protein belongs to the DegT/DnrJ/EryC1 family. ArnB subfamily. Homodimer. Pyridoxal 5'-phosphate is required as a cofactor.

It catalyses the reaction UDP-4-amino-4-deoxy-beta-L-arabinose + 2-oxoglutarate = UDP-beta-L-threo-pentopyranos-4-ulose + L-glutamate. Its pathway is nucleotide-sugar biosynthesis; UDP-4-deoxy-4-formamido-beta-L-arabinose biosynthesis; UDP-4-deoxy-4-formamido-beta-L-arabinose from UDP-alpha-D-glucuronate: step 2/3. It participates in bacterial outer membrane biogenesis; lipopolysaccharide biosynthesis. Catalyzes the conversion of UDP-4-keto-arabinose (UDP-Ara4O) to UDP-4-amino-4-deoxy-L-arabinose (UDP-L-Ara4N). The modified arabinose is attached to lipid A and is required for resistance to polymyxin and cationic antimicrobial peptides. The polypeptide is UDP-4-amino-4-deoxy-L-arabinose--oxoglutarate aminotransferase (Salmonella heidelberg (strain SL476)).